The chain runs to 510 residues: Replication factor C large subunit (510 aa).

Glycine 48–threonine 55 is a binding site for ATP. The disordered stretch occupies residues methionine 459–phenylalanine 510. Positions glutamate 493–phenylalanine 510 are enriched in basic and acidic residues.

This sequence belongs to the activator 1 small subunits family. RfcL subfamily. As to quaternary structure, heteromultimer composed of small subunits (RfcS) and large subunits (RfcL).

Part of the RFC clamp loader complex which loads the PCNA sliding clamp onto DNA. This Methanopyrus kandleri (strain AV19 / DSM 6324 / JCM 9639 / NBRC 100938) protein is Replication factor C large subunit.